The chain runs to 332 residues: MLLLAAAGLVAFVLLLYMVSPLISPKPLALPGAHVVVTGGSSGIGKCIAIECYKQGAFITLVARNEDKLLQAKKDIEKHSINDKQVVLCISVDVSQDYNQVENVIKQAQEKLGPVDMLVNCAGTSMSGKFEELEVSSFEKLMSINYLGSVYPSRAVITTMKERRVGRIVFVSSQAGQLGLFGFTAYSSSKFAIRGLAEALQMEVKPYNVYVTVAYPPDTDTPGLAEENKTKPLETRLISETTAICKPEQVAKQIVKDAIQGNFNSSIGSDGYMLSSLTCGMAPVTSITEGLQQVVTMGLFRTIALFYLGSFDNIVRRCMVQKAKPEVVDKTA.

The first 25 residues, 1-25, serve as a signal peptide directing secretion; the sequence is MLLLAAAGLVAFVLLLYMVSPLISP. Residues 26–270 lie on the Cytoplasmic side of the membrane; sequence KPLALPGAHV…GNFNSSIGSD (245 aa). 7 residues coordinate NADPH: G39, S41, S42, G43, R64, K68, and D93. Positions 39–43 match the GXSXG motif; sequence GGSSG. The Proton donor role is filled by S172. Residue Y186 is the Proton acceptor of the active site. Residues Y186 and K190 each contribute to the NADP(+) site. K190 acts as the Lowers pKa of active site Tyr in catalysis. A helical membrane pass occupies residues 271-291; it reads GYMLSSLTCGMAPVTSITEGL. Topologically, residues 292-293 are lumenal; the sequence is QQ. Residues 294–314 traverse the membrane as a helical segment; sequence VVTMGLFRTIALFYLGSFDNI. Residues 315–332 lie on the Cytoplasmic side of the membrane; it reads VRRCMVQKAKPEVVDKTA.

It belongs to the short-chain dehydrogenases/reductases (SDR) family.

The protein resides in the endoplasmic reticulum membrane. The catalysed reaction is sphinganine + NADP(+) = 3-oxosphinganine + NADPH + H(+). It participates in lipid metabolism; sphingolipid metabolism. Catalyzes the reduction of 3'-oxosphinganine (3-ketodihydrosphingosine/KDS) to sphinganine (dihydrosphingosine/DHS), the second step of de novo sphingolipid biosynthesis. The protein is 3-ketodihydrosphingosine reductase (Kdsr) of Mus musculus (Mouse).